Consider the following 379-residue polypeptide: Leukocyte elastase inhibitor A (379 aa).

Serine 300 bears the Phosphoserine mark. A CARD-binding motif (CBM) region spans residues glutamate 351–proline 379.

Belongs to the serpin family. Ov-serpin subfamily. As to quaternary structure, monomer. Interacts (via C-terminus) with CASP1 and CASP4 (via CARD domain); these interactions regulate the activity of inflammatory caspases. Ubiquitous with higher expression in pancreas, spleen and bone marrow.

Its subcellular location is the secreted. The protein localises to the cytoplasm. It is found in the cytolytic granule. The protein resides in the early endosome. In terms of biological role, neutrophil serine protease inhibitor that plays an essential role in the regulation of the innate immune response, inflammation and cellular homeostasis. Acts primarily to protect the cell from proteases released in the cytoplasm during stress or infection. These proteases are important in killing microbes but when released from granules, these potent enzymes also destroy host proteins and contribute to mortality. Regulates the activity of the neutrophil proteases elastase, cathepsin G, proteinase-3, chymase, chymotrypsin, and kallikrein-3. Also acts as a potent intracellular inhibitor of granzyme H. During inflammation, limits the activity of inflammatory caspases CASP1 and CASP4 by suppressing their caspase-recruitment domain (CARD) oligomerization and enzymatic activation. In addition, promotes the proliferation of beta-cells when secreted. The polypeptide is Leukocyte elastase inhibitor A (Serpinb1a) (Mus musculus (Mouse)).